The following is a 78-amino-acid chain: D-alanyl carrier protein (78 aa).

Positions 1–78 (MAFRENVLEI…MIITQLEALK (78 aa)) constitute a Carrier domain. S36 is subject to O-(pantetheine 4'-phosphoryl)serine.

Belongs to the DltC family. In terms of processing, 4'-phosphopantetheine is transferred from CoA to a specific serine of apo-DCP.

Its subcellular location is the cytoplasm. It participates in cell wall biogenesis; lipoteichoic acid biosynthesis. In terms of biological role, carrier protein involved in the D-alanylation of lipoteichoic acid (LTA). The loading of thioester-linked D-alanine onto DltC is catalyzed by D-alanine--D-alanyl carrier protein ligase DltA. The DltC-carried D-alanyl group is further transferred to cell membrane phosphatidylglycerol (PG) by forming an ester bond, probably catalyzed by DltD. D-alanylation of LTA plays an important role in modulating the properties of the cell wall in Gram-positive bacteria, influencing the net charge of the cell wall. The chain is D-alanyl carrier protein from Listeria innocua serovar 6a (strain ATCC BAA-680 / CLIP 11262).